An 814-amino-acid chain; its full sequence is Acyl-coenzyme A dehydrogenase (814 aa).

The active-site Proton acceptor is Glu-497.

It belongs to the acyl-CoA dehydrogenase family. The cofactor is FAD.

It catalyses the reaction a medium-chain 2,3-saturated fatty acyl-CoA + oxidized [electron-transfer flavoprotein] + H(+) = a medium-chain (2E)-enoyl-CoA + reduced [electron-transfer flavoprotein]. The catalysed reaction is a long-chain 2,3-saturated fatty acyl-CoA + oxidized [electron-transfer flavoprotein] + H(+) = a long-chain (2E)-enoyl-CoA + reduced [electron-transfer flavoprotein]. Its pathway is lipid metabolism; fatty acid beta-oxidation. In terms of biological role, catalyzes the dehydrogenation of acyl-coenzymes A (acyl-CoAs) to 2-enoyl-CoAs, the first step of the beta-oxidation cycle of fatty acid degradation. Is required for E.coli to utilize dodecanoate or oleate as the sole carbon and energy source for growth. The chain is Acyl-coenzyme A dehydrogenase from Escherichia coli (strain K12).